Consider the following 561-residue polypeptide: Arginine--tRNA ligase (561 aa).

Positions 129 to 139 (ANPTGPLHIGH) match the 'HIGH' region motif.

Belongs to the class-I aminoacyl-tRNA synthetase family. In terms of assembly, monomer.

It is found in the cytoplasm. It catalyses the reaction tRNA(Arg) + L-arginine + ATP = L-arginyl-tRNA(Arg) + AMP + diphosphate. The sequence is that of Arginine--tRNA ligase from Geotalea daltonii (strain DSM 22248 / JCM 15807 / FRC-32) (Geobacter daltonii).